A 90-amino-acid chain; its full sequence is MVKKSFIPVISQEKKEENPGSVEFQVFNFTNKIRRLTSHFELHRKDYLSQRGLRKILGKRQRLLSYLSKKNKIRYKKLINLLDIRESKIR.

The protein belongs to the universal ribosomal protein uS15 family. Part of the 30S ribosomal subunit.

It is found in the plastid. It localises to the chloroplast. This Lotus japonicus (Lotus corniculatus var. japonicus) protein is Small ribosomal subunit protein uS15c (rps15).